A 217-amino-acid polypeptide reads, in one-letter code: Glutathione S-transferase 1 (217 aa).

Positions 1–83 (MVMTLYKLDA…YLVSKYGADD (83 aa)) constitute a GST N-terminal domain. Glutathione is bound by residues Ser-11, 53-55 (HTV), and 67-69 (DSH). One can recognise a GST C-terminal domain in the interval 89–211 (DPKKRAIVDQ…APGNDLCKDL (123 aa)).

This sequence belongs to the GST superfamily. Theta family. In terms of assembly, homodimer.

The catalysed reaction is RX + glutathione = an S-substituted glutathione + a halide anion + H(+). In terms of biological role, conjugation of reduced glutathione to a wide number of exogenous and endogenous hydrophobic electrophiles. In Manduca sexta (Tobacco hawkmoth), this protein is Glutathione S-transferase 1 (GST1).